Consider the following 462-residue polypeptide: MVSPRKGKRIRMLKKNDIIQVAISDLSHEGAGVAKHDGFVFFVDNALPEEVIDMRVLKVNKNSGFGKVEAYHYLSPARNADVNLTYLRTGIADLGHLTYEDQLTFKKKQVQDSLYKIAGISDVTVESTIGMTEPLAYRNKAQVPVRRVNGQLETGFFRKHSHDLIPISDYYIQDKEIDRLINFTRDLLRRFDIKPYDETEQTGLLRNIVVRRGHYSGEMMLVLVTTRPKVFRVDQVIEKIVEAFPAVVSIIQNINDKNTNAIFGKDFKTLYGKDTITDSMLGNNYAISAQSFYQVNTVMAEKLYQTAIAFSDLSKDDIVIDAYSGIGTIGLSFAKTVKAVYGVEVIEAAVRDAQHNAALNGITNAYFVADTAEHAMATWAKDGIKPSVILVDPPRKGLTESFIQASVAMGPQKITYVSCNPATMARDIKRYQELGYKLAKVQPVDLFPQTHHVECVVLLIKE.

The 59-residue stretch at 12–70 (MLKKNDIIQVAISDLSHEGAGVAKHDGFVFFVDNALPEEVIDMRVLKVNKNSGFGKVEA) folds into the TRAM domain. S-adenosyl-L-methionine contacts are provided by Gln294, Tyr323, Glu344, and Asp392. The Nucleophile role is filled by Cys419.

It belongs to the class I-like SAM-binding methyltransferase superfamily. RNA M5U methyltransferase family.

This is an uncharacterized protein from Streptococcus pyogenes serotype M3 (strain ATCC BAA-595 / MGAS315).